A 200-amino-acid chain; its full sequence is Peptidyl-tRNA hydrolase (200 aa).

Position 16 (tyrosine 16) interacts with tRNA. Catalysis depends on histidine 21, which acts as the Proton acceptor. TRNA contacts are provided by phenylalanine 67, asparagine 69, and asparagine 115.

The protein belongs to the PTH family. Monomer.

It is found in the cytoplasm. It catalyses the reaction an N-acyl-L-alpha-aminoacyl-tRNA + H2O = an N-acyl-L-amino acid + a tRNA + H(+). In terms of biological role, hydrolyzes ribosome-free peptidyl-tRNAs (with 1 or more amino acids incorporated), which drop off the ribosome during protein synthesis, or as a result of ribosome stalling. Functionally, catalyzes the release of premature peptidyl moieties from peptidyl-tRNA molecules trapped in stalled 50S ribosomal subunits, and thus maintains levels of free tRNAs and 50S ribosomes. This Prochlorococcus marinus (strain MIT 9312) protein is Peptidyl-tRNA hydrolase.